Reading from the N-terminus, the 89-residue chain is MGLTKEHKTEIITKFGDSATDTGKAEVQVALFTRRITDLTGHLQQHPKDKHSRRGLLMLVGKRKRVLNYLKKVDIERYRKVLADLDLRK.

The protein belongs to the universal ribosomal protein uS15 family. In terms of assembly, part of the 30S ribosomal subunit. Forms a bridge to the 50S subunit in the 70S ribosome, contacting the 23S rRNA.

Functionally, one of the primary rRNA binding proteins, it binds directly to 16S rRNA where it helps nucleate assembly of the platform of the 30S subunit by binding and bridging several RNA helices of the 16S rRNA. Forms an intersubunit bridge (bridge B4) with the 23S rRNA of the 50S subunit in the ribosome. The sequence is that of Small ribosomal subunit protein uS15 from Chlorobaculum tepidum (strain ATCC 49652 / DSM 12025 / NBRC 103806 / TLS) (Chlorobium tepidum).